The sequence spans 448 residues: Trigger factor (448 aa).

In terms of domain architecture, PPIase FKBP-type spans 172–257 (GDRVTVDFVG…MKKIEWPHLP (86 aa)).

The protein belongs to the FKBP-type PPIase family. Tig subfamily.

The protein localises to the cytoplasm. It catalyses the reaction [protein]-peptidylproline (omega=180) = [protein]-peptidylproline (omega=0). Functionally, involved in protein export. Acts as a chaperone by maintaining the newly synthesized protein in an open conformation. Functions as a peptidyl-prolyl cis-trans isomerase. The chain is Trigger factor from Burkholderia cenocepacia (strain ATCC BAA-245 / DSM 16553 / LMG 16656 / NCTC 13227 / J2315 / CF5610) (Burkholderia cepacia (strain J2315)).